Here is a 358-residue protein sequence, read N- to C-terminus: uncharacterized protein (358 aa).

Positions 70–88 (RPAATAGTTPATGASGSAR) are enriched in low complexity. The disordered stretch occupies residues 70–93 (RPAATAGTTPATGASGSARPTDAA). The Macro domain maps to 178 to 353 (PSTCRGDNVS…AFSAAIQAGE (176 aa)).

This is an uncharacterized protein from Mycobacterium bovis (strain ATCC BAA-935 / AF2122/97).